A 911-amino-acid chain; its full sequence is Protein transport protein SEC24-1 (911 aa).

Low complexity predominate over residues 108–123 (QPLPQQQQQQQQQQGP). A disordered region spans residues 108–130 (QPLPQQQQQQQQQQGPAKPPKPM). The Zn(2+) site is built by Cys-226, Cys-229, Cys-248, and Cys-251. The zinc finger-like stretch occupies residues 226-251 (CRRCRSYMNPFVHFNQDGRRWKCNIC).

The protein belongs to the SEC23/SEC24 family. SEC24 subfamily. The COPII coat is composed of at least 5 proteins: the SEC23/24 complex, the SEC13/31 complex, and the protein SAR1. Golgi apparatus membrane; Peripheral membrane protein; Cytoplasmic side.

The protein localises to the cytoplasm. Its subcellular location is the cytoplasmic vesicle. It localises to the COPII-coated vesicle membrane. It is found in the endoplasmic reticulum membrane. The protein resides in the golgi apparatus membrane. In terms of biological role, component of the coat protein complex II (COPII) which promotes the formation of transport vesicles from the endoplasmic reticulum (ER). The coat has two main functions, the physical deformation of the endoplasmic reticulum membrane into vesicles and the selection of cargo molecules. The protein is Protein transport protein SEC24-1 (SEC241) of Naumovozyma castellii (Yeast).